A 93-amino-acid chain; its full sequence is Protein NONRESPONDING TO OXYLIPINS 2, mitochondrial (93 aa).

The N-terminal 27 residues, 1–27 (MASRCRSLSKPAFSAFRSAMNKPSIRP), are a transit peptide targeting the mitochondrion.

In terms of tissue distribution, expressed in cotyledons, roots and flowers.

It localises to the mitochondrion. Its function is as follows. Essential for mitochondrial morphology, functionality and distribution. Contributes to 9-lipoxygenase (9-LOX)-derived oxylipin synthesis, but not to brassinosteroids (BRs) signaling. Required for waving-inducing oxylipin 9-hydroxyoctadecatrienoic acid and derivatives (e.g. 9-HOT, 2-HOE, 13-HOT, 13-HOD, 13-KOD, 12,13-KHOD, 9-HOT, 9-HOD, 9-KOT, 9-KOD and 9,10-KHOE)-mediated root development regulation, including callose deposition, root waving and lateral roots formation. Involved in basal plant defense toward pathogenic bacteria (e.g. Pseudomonas syringae pv tomato), both in compatible (e.g. Pst DC3000) and incompatible (e.g. Pst DC3000 avrRPM1) interactions, as well as against obligate biotrophic pathogenic fungi (e.g. Golovinomyces cichoracearum), probably via the promotion of callose deposition in the cell wall. Confers sensitivity to the herbicide isoxaben, a herbicide inhibiting cellulose synthesis and altering the cell wall. This chain is Protein NONRESPONDING TO OXYLIPINS 2, mitochondrial, found in Arabidopsis thaliana (Mouse-ear cress).